Consider the following 1255-residue polypeptide: Kinesin-related protein 7 (1255 aa).

Residues 1 to 26 form a disordered region; sequence MESPVVEGNSGEVATPTLPQPPTPVS. Residues 28–349 form the Kinesin motor domain; sequence NIRVVCRVRP…LQFGTRAKTI (322 aa). 107 to 114 contacts ATP; sequence GQTASGKT. Low complexity-rich tracts occupy residues 454 to 491, 545 to 563, and 583 to 603; these read NNNN…QQEN, NNNN…DSDG, and HNIN…NSNS. 6 disordered regions span residues 454–503, 530–564, 579–628, 661–686, 795–864, and 915–934; these read NNNN…NSSF, GNIS…SDGY, DLND…MDVN, ENEQ…SNAT, EEGS…TKSI, and ISIK…TSIK. Polar residues predominate over residues 608 to 628; it reads VSTSYITSSPNLSPSKSMDVN. Positions 813–834 are enriched in acidic residues; sequence GDDDDEENEDNENEDVIVDSDE. Residues 915–932 show a composition bias toward low complexity; the sequence is ISIKSNKEPSPSSSTTTS. The chain crosses the membrane as a helical span at residues 945–965; it reads IIFTIILTITLVSSSLLCLYL. Residues 1088 to 1223 are a coiled coil; it reads NYITKIDQLS…QELEDAPIAL (136 aa).

Belongs to the TRAFAC class myosin-kinesin ATPase superfamily. Kinesin family.

The protein localises to the nucleus membrane. It is found in the cytoplasm. The protein resides in the cytoskeleton. Its function is as follows. Microtubule-associated force-producing protein that plays a role in organelle transport. Its motor activity is directed toward the microtubule's plus end. May be involved in cell motility or cell differentiation during prestalk formation. This is Kinesin-related protein 7 (kif7) from Dictyostelium discoideum (Social amoeba).